The chain runs to 380 residues: Hydrogenase maturation factor HypD1 (380 aa).

Fe cation is bound by residues Cys36, Cys64, and Cys67.

It belongs to the HypD family. Requires [4Fe-4S] cluster as cofactor.

The protein operates within protein modification; [NiFe] hydrogenase maturation. Functionally, involved in the maturation of [NiFe] hydrogenases. Involved in the biosynthesis of the Fe(CN)(2)CO cofactor. The chain is Hydrogenase maturation factor HypD1 (hypD1) from Bradyrhizobium diazoefficiens (strain JCM 10833 / BCRC 13528 / IAM 13628 / NBRC 14792 / USDA 110).